Consider the following 118-residue polypeptide: Protein MGF 110-6L (118 aa).

The signal sequence occupies residues 1–18 (MLVIFLGILGLLASQVSS). N96 carries N-linked (GlcNAc...) asparagine; by host glycosylation. The Prevents secretion from ER motif lies at 115 to 118 (KDEL).

It belongs to the asfivirus MGF 110 family. Post-translationally, N-glycosylated.

It is found in the host endoplasmic reticulum lumen. Its function is as follows. Plays a role in virus cell tropism, and may be required for efficient virus replication in macrophages. The chain is Protein MGF 110-6L from African swine fever virus (isolate Tick/South Africa/Pretoriuskop Pr4/1996) (ASFV).